Here is a 476-residue protein sequence, read N- to C-terminus: Endonuclease SceI small subunit (476 aa).

This sequence belongs to the LAGLIDADG endonuclease family. As to quaternary structure, endonuclease SceI (Endo.SceI) is a heterodimer of ENS2 and SSC1. In terms of processing, the N-terminus is blocked.

The protein localises to the mitochondrion. Functionally, catalytic component of endonuclease SceI (Endo.SceI), which cleaves specifically at multiple sites on mitochondrial DNA and produces double-stranded breaks. In Saccharomyces cerevisiae (Baker's yeast), this protein is Endonuclease SceI small subunit (ENS2).